A 135-amino-acid polypeptide reads, in one-letter code: Probable transcription factor At2g20613 (135 aa).

A disordered region spans residues 1–104 (MSHKRFNPLT…KRGGGGGEEA (104 aa)). A compositionally biased stretch (acidic residues) spans 28-41 (DSSSDEETDSDSDS). Residues 62–80 (KSVKISEKSVAKRSRETHE) show a composition bias toward basic and acidic residues.

This sequence belongs to the GeBP family.

In Arabidopsis thaliana (Mouse-ear cress), this protein is Probable transcription factor At2g20613.